A 249-amino-acid chain; its full sequence is ATP synthase subunit a (249 aa).

The next 6 helical transmembrane spans lie at 33–53 (YMLI…AQLV), 83–103 (FFPL…IGII), 113–133 (LIVT…YGVA), 139–159 (FFSI…VMFI), 188–208 (VFAG…WVGG), and 216–236 (VALY…FAIL).

The protein belongs to the ATPase A chain family. F-type ATPases have 2 components, CF(1) - the catalytic core - and CF(0) - the membrane proton channel. CF(1) has five subunits: alpha(3), beta(3), gamma(1), delta(1), epsilon(1). CF(0) has three main subunits: a(1), b(2) and c(9-12). The alpha and beta chains form an alternating ring which encloses part of the gamma chain. CF(1) is attached to CF(0) by a central stalk formed by the gamma and epsilon chains, while a peripheral stalk is formed by the delta and b chains.

It is found in the cell inner membrane. Functionally, key component of the proton channel; it plays a direct role in the translocation of protons across the membrane. This chain is ATP synthase subunit a, found in Bradyrhizobium diazoefficiens (strain JCM 10833 / BCRC 13528 / IAM 13628 / NBRC 14792 / USDA 110).